Consider the following 299-residue polypeptide: pH-regulated antigen PRA1 (299 aa).

The first 15 residues, 1–15 (MNYLLFCLFFAFSVA), serve as a signal peptide directing secretion. N-linked (GlcNAc...) asparagine glycosylation is found at Asn48, Asn89, Asn135, and Asn208. The disordered stretch occupies residues 253 to 299 (FEDSDSGSDSGASSTASSSHQHTDSNPSATTDANSHCHTHADGEVHC). The segment covering 259–272 (GSDSGASSTASSSH) has biased composition (low complexity). Over residues 278–288 (NPSATTDANSH) the composition is skewed to polar residues.

It belongs to the ZPS1 family. Component of a multiprotein complex of 250 kDa composed of at least HYR1, MP65, and PRA1. Interacts with host Integrin alpha-M/beta-2 heterodimer. Also binds human factor H (CFH), CFHR1, plasminogen (PLG), complement C3, and C4BPA. Interacts with ZRT101. N- and O-glycosylated. The N- and 0-glycosidically linked carbohydrates represent 18 to 20 percent and 3 to 4 percent, respectively, of the molecular mass of PRA1. 0-linked sugar residues may be involved in the interaction with fibrinogen. Contributes highly to the carbohydrate component of the matrix. Treatment with tunicamycin impairs glycosylation.

It localises to the secreted. Its function is as follows. Cell surface protein involved in the host-parasite interaction during candidal infection. With MP65, represents a major component of the biofilm matrix. As a surface protein, binds the two human complement regulators CFH and CFHR1, as well as plasminogen PLG, mediates complement evasion and extra-cellular matrix interaction and/or degradation. As a released protein, enhances complement control in direct vicinity of the yeast and thus generates an additional protective layer which controls host complement attack, assisting the fungus in escaping host surveillance. Binds to host fluid-phase C3 and blocks cleavage of C3 to C3a and C3b, leading to inhibition of complement activation and protection from uptake of C.albicans by human macrophages. Also mediates human complement control and complement evasion through binding to C4BPA, another human complement inhibitor, as well as through binding to host integrin alpha-M/beta-2. Binds zinc from its environment and then reassociates with ZRT1 to acquire this essential metal. This Candida albicans (strain SC5314 / ATCC MYA-2876) (Yeast) protein is pH-regulated antigen PRA1.